Here is a 63-residue protein sequence, read N- to C-terminus: Large ribosomal subunit protein uL29 (63 aa).

Belongs to the universal ribosomal protein uL29 family.

The protein is Large ribosomal subunit protein uL29 of Shewanella halifaxensis (strain HAW-EB4).